Here is a 128-residue protein sequence, read N- to C-terminus: MTNIPAELAYTAEHEWVQDLSEDSTFKVGITDHAQSELGEVVFVQLPEVGDTVTAGDVVGEIESTKSVSDLFAPVTGEIVSVNDELADNPGLLNEAPYEAGWLFTVRVESQDATAQLLDAQAYQQLLD.

One can recognise a Lipoyl-binding domain in the interval Thr25–Arg107. An N6-lipoyllysine modification is found at Lys66.

It belongs to the GcvH family. The glycine cleavage system is composed of four proteins: P, T, L and H. (R)-lipoate is required as a cofactor.

In terms of biological role, the glycine cleavage system catalyzes the degradation of glycine. The H protein shuttles the methylamine group of glycine from the P protein to the T protein. This chain is Glycine cleavage system H protein, found in Kocuria rhizophila (strain ATCC 9341 / DSM 348 / NBRC 103217 / DC2201).